A 183-amino-acid chain; its full sequence is Dual-action ribosomal maturation protein DarP (183 aa).

Residues 1-20 (MKQKYEDWLNDVPDNQEDDE) form a disordered region.

This sequence belongs to the DarP family.

It is found in the cytoplasm. Member of a network of 50S ribosomal subunit biogenesis factors which assembles along the 30S-50S interface, preventing incorrect 23S rRNA structures from forming. Promotes peptidyl transferase center (PTC) maturation. This chain is Dual-action ribosomal maturation protein DarP, found in Pectobacterium carotovorum subsp. carotovorum (strain PC1).